Reading from the N-terminus, the 444-residue chain is tRNA modification GTPase MnmE (444 aa).

3 residues coordinate (6S)-5-formyl-5,6,7,8-tetrahydrofolate: arginine 28, glutamate 86, and arginine 126. The TrmE-type G domain maps to glycine 224–alanine 368. Residue asparagine 234 coordinates K(+). Residues asparagine 234–threonine 239, serine 253–threonine 259, and aspartate 278–glycine 281 each bind GTP. Position 238 (serine 238) interacts with Mg(2+). Residues serine 253, isoleucine 255, and threonine 258 each coordinate K(+). Threonine 259 contributes to the Mg(2+) binding site. Lysine 444 contacts (6S)-5-formyl-5,6,7,8-tetrahydrofolate.

It belongs to the TRAFAC class TrmE-Era-EngA-EngB-Septin-like GTPase superfamily. TrmE GTPase family. Homodimer. Heterotetramer of two MnmE and two MnmG subunits. K(+) serves as cofactor.

Its subcellular location is the cytoplasm. Its function is as follows. Exhibits a very high intrinsic GTPase hydrolysis rate. Involved in the addition of a carboxymethylaminomethyl (cmnm) group at the wobble position (U34) of certain tRNAs, forming tRNA-cmnm(5)s(2)U34. This is tRNA modification GTPase MnmE from Methylorubrum populi (strain ATCC BAA-705 / NCIMB 13946 / BJ001) (Methylobacterium populi).